The following is a 536-amino-acid chain: Beta-hexosaminidase subunit beta (536 aa).

An N-terminal signal peptide occupies residues 1–31 (MPQSPRSAPGLLLLQALVSLVSLALVAPARL). A glycan (N-linked (GlcNAc...) asparagine) is linked at Asn63. Cysteines 70 and 116 form a disulfide. N-linked (GlcNAc...) asparagine glycosylation is found at Asn169 and Asn306. 2 disulfide bridges follow: Cys288-Cys339 and Cys513-Cys530. The active-site Proton donor is the Glu334.

Belongs to the glycosyl hydrolase 20 family. In terms of assembly, there are 3 forms of beta-hexosaminidase: hexosaminidase A is a heterodimer composed of one subunit alpha and one subunit beta (chain A and B); hexosaminidase B is a homodimer of two beta subunits (two chains A and B); hexosaminidase S is a homodimer of two alpha subunits. The composition of the dimer (isozyme A versus isozyme S) has a significant effect on the substrate specificity of the alpha subunit active site.

Its subcellular location is the lysosome. The protein resides in the cytoplasmic vesicle. It localises to the secretory vesicle. It is found in the cortical granule. The enzyme catalyses Hydrolysis of terminal non-reducing N-acetyl-D-hexosamine residues in N-acetyl-beta-D-hexosaminides.. The catalysed reaction is N-acetyl-beta-D-galactosaminyl-(1-&gt;4)-beta-D-3-sulfogalactosyl-(1-&gt;4)-beta-D-glucosyl-(1&lt;-&gt;1')-ceramide + H2O = a beta-D-3-sulfogalactosyl-(1-&gt;4)-beta-D-glucosyl-(1&lt;-&gt;1')-ceramide + N-acetyl-beta-D-galactosamine. It carries out the reaction a ganglioside GM2 (d18:1(4E)) + H2O = a ganglioside GM3 (d18:1(4E)) + N-acetyl-beta-D-galactosamine. It catalyses the reaction a ganglioside GM2 + H2O = a ganglioside GM3 + N-acetyl-beta-D-galactosamine. The enzyme catalyses beta-D-GalNAc-(1-&gt;4)-alpha-L-IdoA-(1-&gt;3)-beta-D-GalNAc-4-sulfate-(1-&gt;4)-alpha-L-IdoA-(1-&gt;3)-D-GalNAc-4-sulfate + H2O = alpha-L-IdoA-(1-&gt;3)-beta-D-GalNAc-4-sulfate-(1-&gt;4)-alpha-L-IdoA-(1-&gt;3)-D-GalNAc-4-sulfate + N-acetyl-D-galactosamine. The catalysed reaction is N-acetyl-beta-D-6-sulfogalactosaminyl-(1-&gt;4)-alpha-L-iduronyl-(1-&gt;3)-N-acetyl-D-6-sulfogalactosamine + H2O = alpha-L-iduronyl-(1-&gt;3)-N-acetyl-D-6-sulfogalactosamine + N-acetyl-D-6-sulfogalactosamine. With respect to regulation, addition of GM2A stimulates the hydrolysis of sulfated glycosphingolipid SM2 and the ganglioside GM2. Functionally, hydrolyzes the non-reducing end N-acetyl-D-hexosamine and/or sulfated N-acetyl-D-hexosamine of glycoconjugates, such as the oligosaccharide moieties from proteins and neutral glycolipids, or from certain mucopolysaccharides. The isozyme B does not hydrolyze each of these substrates, however hydrolyzes efficiently neutral oligosaccharide. Only the isozyme A is responsible for the degradation of GM2 gangliosides in the presence of GM2A. During fertilization is responsible, at least in part, for the zona block to polyspermy. Present in the cortical granules of non-activated oocytes, is exocytosed during the cortical reaction in response to oocyte activation and inactivates the sperm galactosyltransferase-binding site, accounting for the block in sperm binding to the zona pellucida. This Mus musculus (Mouse) protein is Beta-hexosaminidase subunit beta.